The sequence spans 1086 residues: MTDRSSNEGVVLNKENYPFPRRNGSIHGEITDVKRRRLSERNGYGDKKGSSSKEKTSSFEDELAEYASQLDQDEIKSSKDQQWQRPALPAINPEKDDIYFQQIDSEEFTEGSVPSIRLFGVTDNGNSILVHVVGFLPYFYVKAPVGFRPEMLERFTQDLDATCNGGVIDHCIIEMKENLYGFQGNEKSPFIKIFTTNPRILSRARNVFERGEFNFEELFPVGVGVTTFESNTQYLLRFMIDCDVVGMNWIHLPASKYQFRYQNRVSNCQIEAWINYKDLISLPAEGQWSKMAPLRIMSFDIECAGRKGVFPDPSIDPVIQIASIVTQYGDSTPFVRNVFCVDTCSQIVGTQVYEFQNQAEMLSSWSKFVRDVDPDVLIGYNICNFDIPYLLDRAKSLRIHNFPLLGRIHNFFSVAKETTFSSKAYGTRESKTTSIPGRLQLDMLQVMQRDFKLRSYSLNAVCSQFLGEQKEDVHYSIITDLQNGTADSRRRLAIYCLKDAYLPQRLMDKLMCFVNYTEMARVTGVPFNFLLARGQQIKVISQLFRKALQHDLVVPNIRVNGTDEQYEGATVIEPIKGYYDTPIATLDFSSLYPSIMQAHNLCYTTLLDSNTAELLKLKQDVDYSVTPNGDYFVKPHVRKGLLPIILADLLNARKKAKADLKKETDPFKKAVLDGRQLALKVSANSVYGFTGATNGRLPCLAISSSVTSYGRQMIEKTKDVVEKRYRIENGYSHDAVVIYGDTDSVMVKFGVKTLPEAMKLGEEAANYVSDQFPNPIKLEFEKVYFPYLLISKKRYAGLFWTRTDTYDKMDSKGIETVRRDNCPLVSYVIDTALRKMLIDQDVEGAQLFTKKVISDLLQNKIDMSQLVITKALSKTDYAAKMAHVELAERMRKRDAGSAPAIGDRVAYVIIKGAQGDQFYMRSEDPIYVLENNIPIDAKYYLENQLSKPLLRIFEPILGEKASSLLHGDHTRTISMAAPSVGGIMKFAVKVETCLGCKAPIKKGKTALCENCLNRSAELYQRQVAQVNDLEVRFARLWTQCQRCQGSMHQDVICTSRDCPIFYMRIAEHKKLQQSVDLLKRFDEMSW.

The disordered stretch occupies residues 1–64 (MTDRSSNEGV…KTSSFEDELA (64 aa)). A compositionally biased stretch (basic and acidic residues) spans 29–58 (EITDVKRRRLSERNGYGDKKGSSSKEKTSS). Positions 993, 996, 1008, and 1011 each coordinate Zn(2+). The segment at 993–1011 (CLGCKAPIKKGKTALCENC) adopts a CysA-type zinc-finger fold. [4Fe-4S] cluster-binding residues include cysteine 1040, cysteine 1043, cysteine 1053, and cysteine 1058. The CysB motif signature appears at 1040–1058 (CQRCQGSMHQDVICTSRDC).

This sequence belongs to the DNA polymerase type-B family. In terms of assembly, heterotetramer that consist of the pol3, cdc1, cdc27 and cdm1 subunits. The pol3 subunit contains the polymerase active site and most likely the active site for the 3'-5' exonuclease activity. Requires [4Fe-4S] cluster as cofactor.

The protein localises to the nucleus. The enzyme catalyses DNA(n) + a 2'-deoxyribonucleoside 5'-triphosphate = DNA(n+1) + diphosphate. Its function is as follows. Catalytic component of DNA polymerase delta (DNA polymerase III) which participates in chromosomal DNA replication. Required during synthesis of the lagging DNA strands at the replication fork, binds at/or near replication origins and moves along DNA with the replication fork. Participates in leading strand synthesis during replication initiation and termination. Has 3'-5' proofreading exonuclease activity that corrects errors arising during DNA replication. The chain is DNA polymerase delta catalytic subunit (pol3) from Schizosaccharomyces pombe (strain 972 / ATCC 24843) (Fission yeast).